The following is a 279-amino-acid chain: MALKQYNPVTPGMRNLVLVDRSDLYKGKPVKKLTEGLVKTGGRNNHGRVTSWWRGGGNKRRYRLIDFKRTKVDVAGRVERLEYDPNRTAFIALITYEDGEQTYILAPQRLQVGDAVISADRADIKPGNAMPLKNMPVGTIIHNVEMKPGKGGQLARSAGCYAQLIGKDAGYAQLRLSSGELRLVRGECLATVGAVSNPDNQNEKLGKAGRSRWMGRRPHVRGVVMNPVDHPHGGGEGRTSGGRHPVTPWGKPTKGKRTRSNKKTDSLIMRSRHLAKKKR.

Residues 223–279 (VVMNPVDHPHGGGEGRTSGGRHPVTPWGKPTKGKRTRSNKKTDSLIMRSRHLAKKKR) form a disordered region. The segment covering 270-279 (RSRHLAKKKR) has biased composition (basic residues).

This sequence belongs to the universal ribosomal protein uL2 family. Part of the 50S ribosomal subunit. Forms a bridge to the 30S subunit in the 70S ribosome.

Its function is as follows. One of the primary rRNA binding proteins. Required for association of the 30S and 50S subunits to form the 70S ribosome, for tRNA binding and peptide bond formation. It has been suggested to have peptidyltransferase activity; this is somewhat controversial. Makes several contacts with the 16S rRNA in the 70S ribosome. In Rhodospirillum rubrum (strain ATCC 11170 / ATH 1.1.1 / DSM 467 / LMG 4362 / NCIMB 8255 / S1), this protein is Large ribosomal subunit protein uL2.